The chain runs to 272 residues: Ribonuclease HII (272 aa).

The 186-residue stretch at 87 to 272 folds into the RNase H type-2 domain; sequence KYVAGVDEVG…HRMSFLKNIL (186 aa). Residues aspartate 93, glutamate 94, and aspartate 188 each coordinate a divalent metal cation.

This sequence belongs to the RNase HII family. The cofactor is Mn(2+). Requires Mg(2+) as cofactor.

The protein localises to the cytoplasm. The catalysed reaction is Endonucleolytic cleavage to 5'-phosphomonoester.. Its function is as follows. Endonuclease that specifically degrades the RNA of RNA-DNA hybrids. This Clostridium perfringens (strain SM101 / Type A) protein is Ribonuclease HII.